The primary structure comprises 71 residues: Small ribosomal subunit protein bS21 (71 aa).

The segment at Thr43 to Tyr71 is disordered. Over residues Lys46–Lys59 the composition is skewed to basic residues. Basic and acidic residues predominate over residues Leu60 to Tyr71.

Belongs to the bacterial ribosomal protein bS21 family.

This Edwardsiella ictaluri (strain 93-146) protein is Small ribosomal subunit protein bS21.